Consider the following 78-residue polypeptide: MLVLSRKLGEGIVIGDDIVLKIVEIKGGTIRIGIDAPLDKKIYRQEVYQRIIAENQEASQWSIDDLDAISSLISPQPK.

Belongs to the CsrA/RsmA family. As to quaternary structure, homodimer; the beta-strands of each monomer intercalate to form a hydrophobic core, while the alpha-helices form wings that extend away from the core.

Its subcellular location is the cytoplasm. In terms of biological role, a translational regulator that binds mRNA to regulate translation initiation and/or mRNA stability. Usually binds in the 5'-UTR at or near the Shine-Dalgarno sequence preventing ribosome-binding, thus repressing translation. Its main target seems to be the major flagellin gene, while its function is anatagonized by FliW. This chain is Translational regulator CsrA, found in Desulfotalea psychrophila (strain LSv54 / DSM 12343).